The sequence spans 186 residues: Bilin biosynthesis protein CpeZ (186 aa).

Its function is as follows. Involved in the biosynthesis of bilin. This chain is Bilin biosynthesis protein CpeZ (cpeZ), found in Synechococcus sp. (strain WH8020).